Consider the following 251-residue polypeptide: Ubiquinone/menaquinone biosynthesis C-methyltransferase UbiE (251 aa).

S-adenosyl-L-methionine is bound by residues Thr74, Asp95, and Asn123–Ala124.

It belongs to the class I-like SAM-binding methyltransferase superfamily. MenG/UbiE family.

It carries out the reaction a 2-demethylmenaquinol + S-adenosyl-L-methionine = a menaquinol + S-adenosyl-L-homocysteine + H(+). The enzyme catalyses a 2-methoxy-6-(all-trans-polyprenyl)benzene-1,4-diol + S-adenosyl-L-methionine = a 5-methoxy-2-methyl-3-(all-trans-polyprenyl)benzene-1,4-diol + S-adenosyl-L-homocysteine + H(+). The protein operates within quinol/quinone metabolism; menaquinone biosynthesis; menaquinol from 1,4-dihydroxy-2-naphthoate: step 2/2. Its pathway is cofactor biosynthesis; ubiquinone biosynthesis. Its function is as follows. Methyltransferase required for the conversion of demethylmenaquinol (DMKH2) to menaquinol (MKH2) and the conversion of 2-polyprenyl-6-methoxy-1,4-benzoquinol (DDMQH2) to 2-polyprenyl-3-methyl-6-methoxy-1,4-benzoquinol (DMQH2). This Erwinia tasmaniensis (strain DSM 17950 / CFBP 7177 / CIP 109463 / NCPPB 4357 / Et1/99) protein is Ubiquinone/menaquinone biosynthesis C-methyltransferase UbiE.